The chain runs to 436 residues: MKYLDVRLPEFANEFQQVLSRGKMDMKEVSSLVQELLDEIRTEGLDALKKHIARFDKWEVKSFEDLRISPKECLNAYNQLSSELKSALHLAYDRIYAFHRKQKMQSWIDCEENGNILGSKFTPMERAGLYIPGGKAAYPSSLLMNAIPAIVAGVKEIVVCSPTPHNQANPLVLAALHLCGITEVYKVGGASAIGLMAYGCKEIPKVDVITGPGNIFVACAKKLVFGEVNIDMVAGPSEIAIIADSQANPLYIAYDLLSQAEHDEMASSILISDSAPLIESVQKHIEQILPSMPRAEIAGASIKNRAVMIYTRNLQESIEIANAIAPEHLEVLTTTPFDTLPYIKHAGAIFLGEHSSEPIGDYLAGPNHTLPTGGSARFFSPLGVEHFMKKSSIIAFSATALEEVGESCALLAQSESLSAHAQAVLTRLDSIKSKRE.

Residues Ser237, Gln259, and His262 each coordinate substrate. Residues Gln259 and His262 each contribute to the Zn(2+) site. Catalysis depends on proton acceptor residues Glu327 and His328. Substrate contacts are provided by His328, Asp361, Glu415, and His420. Position 361 (Asp361) interacts with Zn(2+). Residue His420 participates in Zn(2+) binding.

Belongs to the histidinol dehydrogenase family. Zn(2+) serves as cofactor.

The catalysed reaction is L-histidinol + 2 NAD(+) + H2O = L-histidine + 2 NADH + 3 H(+). Its pathway is amino-acid biosynthesis; L-histidine biosynthesis; L-histidine from 5-phospho-alpha-D-ribose 1-diphosphate: step 9/9. Catalyzes the sequential NAD-dependent oxidations of L-histidinol to L-histidinaldehyde and then to L-histidine. In Helicobacter hepaticus (strain ATCC 51449 / 3B1), this protein is Histidinol dehydrogenase.